Reading from the N-terminus, the 986-residue chain is Translation initiation factor IF-2 (986 aa).

Residues 47 to 388 (SAPAQTPHKE…RSKGRKGKYE (342 aa)) are disordered. A compositionally biased stretch (basic and acidic residues) spans 53–64 (PHKEVSQEEVRV). The span at 78 to 94 (PEAASAEAASAPAAQEE) shows a compositional bias: low complexity. Over residues 95-113 (APQKAEPEKVEAEKAEAPK) the composition is skewed to basic and acidic residues. Composition is skewed to low complexity over residues 127–141 (EAAP…PAEA) and 153–214 (APVA…QAPA). 2 stretches are compositionally biased toward basic and acidic residues: residues 215-225 (KAEEQEPEKAT) and 268-278 (GVERPGTERPA). Positions 286–300 (PAGAPGRPGERPTTG) are enriched in low complexity. The span at 358–374 (GKKDSFKDILDKRERVF) shows a compositional bias: basic and acidic residues. One can recognise a tr-type G domain in the interval 486-653 (KRPPVVTIMG…MVLLQADVLE (168 aa)). The tract at residues 495–502 (GHVDHGKT) is G1. 495 to 502 (GHVDHGKT) serves as a coordination point for GTP. Residues 520-524 (GITQH) are G2. Positions 541–544 (DTPG) are G3. Residues 541 to 545 (DTPGH) and 595 to 598 (NKID) contribute to the GTP site. The segment at 595–598 (NKID) is G4. Positions 631–633 (SAK) are G5.

It belongs to the TRAFAC class translation factor GTPase superfamily. Classic translation factor GTPase family. IF-2 subfamily.

Its subcellular location is the cytoplasm. Functionally, one of the essential components for the initiation of protein synthesis. Protects formylmethionyl-tRNA from spontaneous hydrolysis and promotes its binding to the 30S ribosomal subunits. Also involved in the hydrolysis of GTP during the formation of the 70S ribosomal complex. The polypeptide is Translation initiation factor IF-2 (Citrifermentans bemidjiense (strain ATCC BAA-1014 / DSM 16622 / JCM 12645 / Bem) (Geobacter bemidjiensis)).